The sequence spans 457 residues: MRIAEWKEKVESQGCYDAVSEMLERIEKSRLNAYITVCKDEALKMAEKYDRGELKGRLAGIPVAVKDNISTKGILTTCASKMLSNYRPVFDAHVVEKLKQEGAIIIGKANMDEFAMGTTTETSYFGVVRNPHDEARVAGGSSGGSGAVIAADEAVLSLGSDTGGSIRCPASFCGVYGLKPTYGLVSRYGLIPYANSLEQIGPMADSIEDLALLLEVIAGKDTRDSTNAGREFRFEPEDRKLRVGIIAEMGGNDDVMKRFNEAVEVIREKHEVGEVSMPSFKYALAAYYIIAMSEASSNLARYDGVRYGFALEKLDSWRRYFSKVRAEGFGDEVKRRIMLGSYALSAGYYGKYYLKAQKVRTLVIRDFKKAFEEYDVLISPTMPALPFKIGELADPLTMYKADVNTVPVNLAGLPALSVPVGMVKGLPVGLQVIGNYFSENTLLNFGKWVGERFGEGD.

Active-site charge relay system residues include lysine 66 and serine 141. The Acyl-ester intermediate role is filled by serine 165.

The protein belongs to the amidase family. GatA subfamily. As to quaternary structure, heterotrimer of A, B and C subunits.

It catalyses the reaction L-glutamyl-tRNA(Gln) + L-glutamine + ATP + H2O = L-glutaminyl-tRNA(Gln) + L-glutamate + ADP + phosphate + H(+). Functionally, allows the formation of correctly charged Gln-tRNA(Gln) through the transamidation of misacylated Glu-tRNA(Gln) in organisms which lack glutaminyl-tRNA synthetase. The reaction takes place in the presence of glutamine and ATP through an activated gamma-phospho-Glu-tRNA(Gln). The chain is Glutamyl-tRNA(Gln) amidotransferase subunit A (gatA) from Archaeoglobus fulgidus (strain ATCC 49558 / DSM 4304 / JCM 9628 / NBRC 100126 / VC-16).